Here is a 378-residue protein sequence, read N- to C-terminus: Queuine tRNA-ribosyltransferase (378 aa).

D91 (proton acceptor) is an active-site residue. Substrate contacts are provided by residues 91 to 95, D145, Q197, and G224; that span reads DSGGF. Catalysis depends on D274, which acts as the Nucleophile. Positions 279–283 are RNA binding; important for wobble base 34 recognition; it reads TRLAR. C312, C314, C317, and H343 together coordinate Zn(2+).

The protein belongs to the queuine tRNA-ribosyltransferase family. As to quaternary structure, homodimer. Within each dimer, one monomer is responsible for RNA recognition and catalysis, while the other monomer binds to the replacement base PreQ1. Zn(2+) serves as cofactor.

The enzyme catalyses 7-aminomethyl-7-carbaguanine + guanosine(34) in tRNA = 7-aminomethyl-7-carbaguanosine(34) in tRNA + guanine. The protein operates within tRNA modification; tRNA-queuosine biosynthesis. Catalyzes the base-exchange of a guanine (G) residue with the queuine precursor 7-aminomethyl-7-deazaguanine (PreQ1) at position 34 (anticodon wobble position) in tRNAs with GU(N) anticodons (tRNA-Asp, -Asn, -His and -Tyr). Catalysis occurs through a double-displacement mechanism. The nucleophile active site attacks the C1' of nucleotide 34 to detach the guanine base from the RNA, forming a covalent enzyme-RNA intermediate. The proton acceptor active site deprotonates the incoming PreQ1, allowing a nucleophilic attack on the C1' of the ribose to form the product. After dissociation, two additional enzymatic reactions on the tRNA convert PreQ1 to queuine (Q), resulting in the hypermodified nucleoside queuosine (7-(((4,5-cis-dihydroxy-2-cyclopenten-1-yl)amino)methyl)-7-deazaguanosine). This chain is Queuine tRNA-ribosyltransferase, found in Methylacidiphilum infernorum (isolate V4) (Methylokorus infernorum (strain V4)).